A 249-amino-acid polypeptide reads, in one-letter code: Demethylmenaquinone methyltransferase (249 aa).

S-adenosyl-L-methionine-binding positions include T67, D87, and D115–A116.

The protein belongs to the class I-like SAM-binding methyltransferase superfamily. MenG/UbiE family.

It carries out the reaction a 2-demethylmenaquinol + S-adenosyl-L-methionine = a menaquinol + S-adenosyl-L-homocysteine + H(+). The protein operates within quinol/quinone metabolism; menaquinone biosynthesis; menaquinol from 1,4-dihydroxy-2-naphthoate: step 2/2. Functionally, methyltransferase required for the conversion of demethylmenaquinol (DMKH2) to menaquinol (MKH2). This is Demethylmenaquinone methyltransferase from Leptospira interrogans serogroup Icterohaemorrhagiae serovar copenhageni (strain Fiocruz L1-130).